A 292-amino-acid chain; its full sequence is Ventral anterior homeobox 2 (292 aa).

Residues M1–A36 show a composition bias toward basic and acidic residues. A disordered region spans residues M1 to D74. Residues T38–A55 are compositionally biased toward polar residues. A DNA-binding region (homeobox) is located at residues P102–Q161. The interval A212 to L241 is disordered.

This sequence belongs to the EMX homeobox family.

The protein resides in the nucleus. Its function is as follows. Transcription factor that may function in dorsoventral specification of the forebrain. Regulates the expression of Wnt signaling antagonists including the expression of a truncated TCF7L2 isoform that cannot bind CTNNB1 and acts therefore as a potent dominant-negative Wnt antagonist. Plays a crucial role in eye development and, in particular, in the specification of the ventral optic vesicle. May be a regulator of axial polarization in the retina. The sequence is that of Ventral anterior homeobox 2 (Vax2) from Rattus norvegicus (Rat).